A 459-amino-acid polypeptide reads, in one-letter code: Bifunctional protein GlmU (459 aa).

The interval 1–230 (MTTRNTIILA…FDESMGVNDR (230 aa)) is pyrophosphorylase. Residues 9 to 12 (LAAG), Lys23, Gln73, 78 to 79 (GT), 101 to 103 (SGD), Gly140, Glu155, Asn170, and Asn228 each bind UDP-N-acetyl-alpha-D-glucosamine. A Mg(2+)-binding site is contributed by Asp103. Position 228 (Asn228) interacts with Mg(2+). The segment at 231–251 (VALSAATKIMRDRINEAHMRD) is linker. The N-acetyltransferase stretch occupies residues 252 to 459 (GVTLIDPATT…YQKLPYRGED (208 aa)). UDP-N-acetyl-alpha-D-glucosamine is bound by residues Arg333 and Lys351. Residue His363 is the Proton acceptor of the active site. UDP-N-acetyl-alpha-D-glucosamine contacts are provided by Tyr366 and Asn377. Residues 386-387 (NY), Ser405, Ala423, and Arg440 contribute to the acetyl-CoA site.

It in the N-terminal section; belongs to the N-acetylglucosamine-1-phosphate uridyltransferase family. In the C-terminal section; belongs to the transferase hexapeptide repeat family. In terms of assembly, homotrimer. Requires Mg(2+) as cofactor.

Its subcellular location is the cytoplasm. It carries out the reaction alpha-D-glucosamine 1-phosphate + acetyl-CoA = N-acetyl-alpha-D-glucosamine 1-phosphate + CoA + H(+). It catalyses the reaction N-acetyl-alpha-D-glucosamine 1-phosphate + UTP + H(+) = UDP-N-acetyl-alpha-D-glucosamine + diphosphate. It functions in the pathway nucleotide-sugar biosynthesis; UDP-N-acetyl-alpha-D-glucosamine biosynthesis; N-acetyl-alpha-D-glucosamine 1-phosphate from alpha-D-glucosamine 6-phosphate (route II): step 2/2. Its pathway is nucleotide-sugar biosynthesis; UDP-N-acetyl-alpha-D-glucosamine biosynthesis; UDP-N-acetyl-alpha-D-glucosamine from N-acetyl-alpha-D-glucosamine 1-phosphate: step 1/1. It participates in bacterial outer membrane biogenesis; LPS lipid A biosynthesis. Functionally, catalyzes the last two sequential reactions in the de novo biosynthetic pathway for UDP-N-acetylglucosamine (UDP-GlcNAc). The C-terminal domain catalyzes the transfer of acetyl group from acetyl coenzyme A to glucosamine-1-phosphate (GlcN-1-P) to produce N-acetylglucosamine-1-phosphate (GlcNAc-1-P), which is converted into UDP-GlcNAc by the transfer of uridine 5-monophosphate (from uridine 5-triphosphate), a reaction catalyzed by the N-terminal domain. The chain is Bifunctional protein GlmU from Levilactobacillus brevis (strain ATCC 367 / BCRC 12310 / CIP 105137 / JCM 1170 / LMG 11437 / NCIMB 947 / NCTC 947) (Lactobacillus brevis).